The sequence spans 773 residues: DNA gyrase subunit B (773 aa).

The Toprim domain occupies 416–530 (SEIFLVEGDS…QGHVFIAQAP (115 aa)). Glutamate 422, aspartate 495, and aspartate 497 together coordinate Mg(2+).

This sequence belongs to the type II topoisomerase GyrB family. Heterotetramer, composed of two GyrA and two GyrB chains. In the heterotetramer, GyrA contains the active site tyrosine that forms a transient covalent intermediate with DNA, while GyrB binds cofactors and catalyzes ATP hydrolysis. The cofactor is Mg(2+). It depends on Mn(2+) as a cofactor. Ca(2+) serves as cofactor.

It localises to the cytoplasm. The catalysed reaction is ATP-dependent breakage, passage and rejoining of double-stranded DNA.. Functionally, a type II topoisomerase that negatively supercoils closed circular double-stranded (ds) DNA in an ATP-dependent manner to modulate DNA topology and maintain chromosomes in an underwound state. Negative supercoiling favors strand separation, and DNA replication, transcription, recombination and repair, all of which involve strand separation. Also able to catalyze the interconversion of other topological isomers of dsDNA rings, including catenanes and knotted rings. Type II topoisomerases break and join 2 DNA strands simultaneously in an ATP-dependent manner. The sequence is that of DNA gyrase subunit B from Helicobacter pylori (strain J99 / ATCC 700824) (Campylobacter pylori J99).